The primary structure comprises 428 residues: Glucose-1-phosphate adenylyltransferase (428 aa).

Residues Tyr114, Gly179, 194-195, and Ser212 each bind alpha-D-glucose 1-phosphate; that span reads EK.

It belongs to the bacterial/plant glucose-1-phosphate adenylyltransferase family. Homotetramer.

It catalyses the reaction alpha-D-glucose 1-phosphate + ATP + H(+) = ADP-alpha-D-glucose + diphosphate. Its pathway is glycan biosynthesis; glycogen biosynthesis. In terms of biological role, involved in the biosynthesis of ADP-glucose, a building block required for the elongation reactions to produce glycogen. Catalyzes the reaction between ATP and alpha-D-glucose 1-phosphate (G1P) to produce pyrophosphate and ADP-Glc. In Yersinia pseudotuberculosis serotype IB (strain PB1/+), this protein is Glucose-1-phosphate adenylyltransferase.